Here is a 569-residue protein sequence, read N- to C-terminus: Proline--tRNA ligase (569 aa).

Belongs to the class-II aminoacyl-tRNA synthetase family. ProS type 1 subfamily. In terms of assembly, homodimer.

The protein localises to the cytoplasm. The catalysed reaction is tRNA(Pro) + L-proline + ATP = L-prolyl-tRNA(Pro) + AMP + diphosphate. In terms of biological role, catalyzes the attachment of proline to tRNA(Pro) in a two-step reaction: proline is first activated by ATP to form Pro-AMP and then transferred to the acceptor end of tRNA(Pro). As ProRS can inadvertently accommodate and process non-cognate amino acids such as alanine and cysteine, to avoid such errors it has two additional distinct editing activities against alanine. One activity is designated as 'pretransfer' editing and involves the tRNA(Pro)-independent hydrolysis of activated Ala-AMP. The other activity is designated 'posttransfer' editing and involves deacylation of mischarged Ala-tRNA(Pro). The misacylated Cys-tRNA(Pro) is not edited by ProRS. The protein is Proline--tRNA ligase of Legionella pneumophila subsp. pneumophila (strain Philadelphia 1 / ATCC 33152 / DSM 7513).